The sequence spans 309 residues: Homoserine O-succinyltransferase (309 aa).

Cys-142 acts as the Acyl-thioester intermediate in catalysis. Residues Lys-163 and Ser-192 each coordinate substrate. The Proton acceptor role is filled by His-235. Glu-237 is an active-site residue. Arg-249 contacts substrate.

It belongs to the MetA family. In terms of assembly, homodimer.

It localises to the cytoplasm. It carries out the reaction L-homoserine + succinyl-CoA = O-succinyl-L-homoserine + CoA. It participates in amino-acid biosynthesis; L-methionine biosynthesis via de novo pathway; O-succinyl-L-homoserine from L-homoserine: step 1/1. Its function is as follows. Transfers a succinyl group from succinyl-CoA to L-homoserine, forming succinyl-L-homoserine. The polypeptide is Homoserine O-succinyltransferase (Escherichia coli O157:H7).